The sequence spans 370 residues: Putative glutamate--cysteine ligase 2 (370 aa).

It belongs to the glutamate--cysteine ligase type 2 family. YbdK subfamily.

It catalyses the reaction L-cysteine + L-glutamate + ATP = gamma-L-glutamyl-L-cysteine + ADP + phosphate + H(+). Its function is as follows. ATP-dependent carboxylate-amine ligase which exhibits weak glutamate--cysteine ligase activity. The protein is Putative glutamate--cysteine ligase 2 of Herminiimonas arsenicoxydans.